A 225-amino-acid polypeptide reads, in one-letter code: Cytidylate kinase (225 aa).

11–19 provides a ligand contact to ATP; that stretch reads GPAAAGKST.

This sequence belongs to the cytidylate kinase family. Type 1 subfamily.

The protein resides in the cytoplasm. The catalysed reaction is CMP + ATP = CDP + ADP. The enzyme catalyses dCMP + ATP = dCDP + ADP. The sequence is that of Cytidylate kinase from Bacillus anthracis (strain A0248).